Here is a 329-residue protein sequence, read N- to C-terminus: tRNA N6-adenosine threonylcarbamoyltransferase (329 aa).

Fe cation contacts are provided by H107 and H111. Substrate contacts are provided by residues 129–133, D162, G175, and N268; that span reads LVSGG. D296 contacts Fe cation.

It belongs to the KAE1 / TsaD family. The cofactor is Fe(2+).

It is found in the cytoplasm. The enzyme catalyses L-threonylcarbamoyladenylate + adenosine(37) in tRNA = N(6)-L-threonylcarbamoyladenosine(37) in tRNA + AMP + H(+). In terms of biological role, required for the formation of a threonylcarbamoyl group on adenosine at position 37 (t(6)A37) in tRNAs that read codons beginning with adenine. Is involved in the transfer of the threonylcarbamoyl moiety of threonylcarbamoyl-AMP (TC-AMP) to the N6 group of A37, together with TsaE and TsaB. TsaD likely plays a direct catalytic role in this reaction. This is tRNA N6-adenosine threonylcarbamoyltransferase from Nitratiruptor sp. (strain SB155-2).